The sequence spans 1100 residues: Formin-like protein 1 (1100 aa).

A compositionally biased stretch (low complexity) spans 1 to 13; it reads MGNAAGSAEQPAG. Disordered stretches follow at residues 1–31, 167–200, 446–474, and 510–635; these read MGNA…PMPA, STDN…PKSR, RFSE…TRPS, and TPSG…AKKP. The N-myristoyl glycine moiety is linked to residue G2. Phosphoserine is present on S7. Residues 14–28 are compositionally biased toward pro residues; the sequence is PAAPPPKQPAPPKQP. Positions 27 to 468 constitute a GBD/FH3 domain; sequence QPMPAAGELE…PPEPEKAPPA (442 aa). Phosphoserine is present on S184. Low complexity predominate over residues 517–538; sequence PTPGVPTGSPSPDLAPAAEPAP. Pro residues predominate over residues 539–615; that stretch reads GAAPPPPPPL…PPPPPPPGGP (77 aa). Phosphoserine occurs at positions 624 and 693. Residues 632–1023 enclose the FH2 domain; the sequence is AKKPIQTKFR…QEAGADTPGK (392 aa). The disordered stretch occupies residues 1008–1037; it reads KKEAAAQEAGADTPGKGEPPAPKSPPKARR. Residues 1013–1023 are compositionally biased toward low complexity; the sequence is AQEAGADTPGK. S1031 is modified (phosphoserine). Residues 1059 to 1090 form the DAD domain; sequence SDRDGAIEDIITVIKTVPFTARTGKRTSRLLC.

The protein belongs to the formin homology family. In terms of assembly, interacts with RAC1, PFN1 and PFN2. Interacts (activated by RAC1) with SRGAP2 (via SH3 domain); regulates the actin filament severing activity of FMNL1. In terms of processing, myristoylation mediates membrane localization and blebbing. In terms of tissue distribution, expressed in heart, brain, placenta, lung, liver, skeletal muscle, kidney and pancreas.

It localises to the cytoplasm. The protein localises to the cell membrane. It is found in the cytoplasmic vesicle. Its subcellular location is the phagosome. The protein resides in the cell cortex. It localises to the cell projection. The protein localises to the bleb. In terms of biological role, may play a role in the control of cell motility and survival of macrophages. Plays a role in the regulation of cell morphology and cytoskeletal organization. Required in the cortical actin filament dynamics and cell shape. The polypeptide is Formin-like protein 1 (FMNL1) (Homo sapiens (Human)).